A 453-amino-acid chain; its full sequence is Dihydrolipoyllysine-residue succinyltransferase component of 2-oxoglutarate dehydrogenase complex, mitochondrial (453 aa).

A mitochondrion-targeting transit peptide spans 1-67; sequence MLSRSRCVSR…RFFRTTAVCK (67 aa). The region spanning 70 to 144 is the Lipoyl-binding domain; sequence LVTVKTPAFA…EGGTPLFTLR (75 aa). Serine 81 bears the Phosphoserine mark. An N6-lipoyllysine modification is found at lysine 110. The span at 152–172 shows a compositional bias: low complexity; that stretch reads KAKPAEAPAAAAPKAEPTAAA. A disordered region spans residues 152-225; sequence KAKPAEAPAA…GKGLRSEHRE (74 aa). Lysine 154 is subject to N6-acetyllysine. Positions 173–196 are enriched in pro residues; that stretch reads VPPPAAPIPTQMPPVPSPSQPPSG. Lysine 267, lysine 272, lysine 273, lysine 277, and lysine 307 each carry N6-acetyllysine. Catalysis depends on residues histidine 424 and aspartate 428.

Belongs to the 2-oxoacid dehydrogenase family. In terms of assembly, the 2-oxoglutarate dehydrogenase complex is composed of OGDH (2-oxoglutarate dehydrogenase; E1), DLST (dihydrolipoamide succinyltransferase; E2), DLD (dihydrolipoamide dehydrogenase; E3) and the assembly factor KGD4. It contains multiple copies of the three enzymatic components (E1, E2 and E3). In the nucleus, the 2-oxoglutarate dehydrogenase complex associates with KAT2A. Interacts with ABHD11; this interaction maintains the functional lipoylation of the 2-oxoglutarate dehydrogenase complex. (R)-lipoate is required as a cofactor.

It is found in the mitochondrion matrix. Its subcellular location is the nucleus. The catalysed reaction is N(6)-[(R)-dihydrolipoyl]-L-lysyl-[protein] + succinyl-CoA = N(6)-[(R)-S(8)-succinyldihydrolipoyl]-L-lysyl-[protein] + CoA. The protein operates within amino-acid degradation; L-lysine degradation via saccharopine pathway; glutaryl-CoA from L-lysine: step 6/6. It functions in the pathway carbohydrate metabolism; tricarboxylic acid cycle. Functionally, dihydrolipoamide succinyltransferase (E2) component of the 2-oxoglutarate dehydrogenase complex. The 2-oxoglutarate dehydrogenase complex catalyzes the overall conversion of 2-oxoglutarate to succinyl-CoA and CO(2). The 2-oxoglutarate dehydrogenase complex is mainly active in the mitochondrion. A fraction of the 2-oxoglutarate dehydrogenase complex also localizes in the nucleus and is required for lysine succinylation of histones: associates with KAT2A on chromatin and provides succinyl-CoA to histone succinyltransferase KAT2A. The protein is Dihydrolipoyllysine-residue succinyltransferase component of 2-oxoglutarate dehydrogenase complex, mitochondrial of Homo sapiens (Human).